Reading from the N-terminus, the 240-residue chain is Ribosomal RNA large subunit methyltransferase E (240 aa).

A compositionally biased stretch (gly residues) spans 1–20 (MSKAGGNKGGSRTGGRGGAG). Residues 1–33 (MSKAGGNKGGSRTGGRGGAGSSNLHVRVKKKAG) are disordered. Gly-92, Trp-94, Asp-115, Asp-131, and Asp-155 together coordinate S-adenosyl-L-methionine. Lys-195 functions as the Proton acceptor in the catalytic mechanism.

It belongs to the class I-like SAM-binding methyltransferase superfamily. RNA methyltransferase RlmE family.

It is found in the cytoplasm. It carries out the reaction uridine(2552) in 23S rRNA + S-adenosyl-L-methionine = 2'-O-methyluridine(2552) in 23S rRNA + S-adenosyl-L-homocysteine + H(+). Functionally, specifically methylates the uridine in position 2552 of 23S rRNA at the 2'-O position of the ribose in the fully assembled 50S ribosomal subunit. The sequence is that of Ribosomal RNA large subunit methyltransferase E from Brucella abortus (strain S19).